Reading from the N-terminus, the 46-residue chain is Iota-conotoxin-like M11.1 (46 aa).

4 cysteine pairs are disulfide-bonded: C5-C19, C12-C22, C18-C27, and C21-C38. M44 is modified (D-methionine). Residue R46 is a propeptide, removed by a carboxypeptidase.

The protein belongs to the conotoxin I1 superfamily. In terms of tissue distribution, expressed by the venom duct.

The protein resides in the secreted. In terms of biological role, iota-conotoxins bind to voltage-gated sodium channels (Nav) and act as agonists by shifting the voltage-dependence of activation to more hyperpolarized levels. Produces general excitatory symptoms. This chain is Iota-conotoxin-like M11.1, found in Conus magus (Magical cone).